The primary structure comprises 254 residues: Low affinity immunoglobulin gamma Fc region receptor III-A (254 aa).

A signal peptide spans 1 to 16; sequence MWQLLLPTALLLLVSA. At 17 to 208 the chain is on the extracellular side; that stretch reads GMRAEDLPKA…ISSFFPPGYQ (192 aa). 2 Ig-like C2-type domains span residues 24 to 105 and 107 to 189; these read PKAV…LEVH and GWLL…VNIT. Cystine bridges form between Cys47-Cys89 and Cys128-Cys172. Asn56, Asn63, and Asn82 each carry an N-linked (GlcNAc...) asparagine glycan. N-linked (GlcNAc...) asparagine glycans are attached at residues Asn180 and Asn187. A helical membrane pass occupies residues 209–229; sequence VSFCLVMVLLFAVDTGLYFSM. Over 230–254 the chain is Cytoplasmic; that stretch reads KKSIPSSTRDWEDHKFKWSKDPQDK.

Forms a heterooligomeric complex with ITAM-containing signaling subunits, either a homodimer of CD247, a homodimer of FCER1G or a heterodimer of CD247 and FCER1G. Interacts (via transmembrane domain) with signaling subunits; this interaction is a prerequisite for receptor complex expression on the cell surface and intracellular signal transduction. Binds the Fc region of antigen-complexed IgG with a preference for IgG1 and IgG3 isotypes. Interacts with CD2; this interaction is involved in NK cell activation and cytotoxicity. Interacts with S100A4; this interaction inhibits PKC-dependent phosphorylation of FCGR3A. Post-translationally, glycosylated. Glycosylation plays an inhibitory role in the interaction with IgG1 and IgG2. Undergoes rapid ectodomain shedding upon NK cell stimulation. The soluble form is produced by a proteolytic cleavage mediated by ADAM17. Repeated stimulation causes receptor shedding, a mechanism that allows for increased NK cell motility and detachment from opsonized target cells while avoiding activation-induced NK cell apoptosis. As to expression, lymphocytes and monocytes.

The protein resides in the cell membrane. It localises to the secreted. In terms of biological role, receptor for the invariable Fc fragment of immunoglobulin gamma (IgG). Optimally activated upon binding of clustered antigen-IgG complexes displayed on cell surfaces, triggers lysis of antibody-coated cells, a process known as antibody-dependent cellular cytotoxicity (ADCC). Does not bind free monomeric IgG, thus avoiding inappropriate effector cell activation in the absence of antigenic trigger. Mediates IgG effector functions on natural killer (NK) cells. Binds antigen-IgG complexes generated upon infection and triggers NK cell-dependent cytokine production and degranulation to limit viral load and propagation. Involved in the generation of memory-like adaptive NK cells capable to produce high amounts of IFNG and to efficiently eliminate virus-infected cells via ADCC. Regulates NK cell survival and proliferation, in particular by preventing NK cell progenitor apoptosis. Fc-binding subunit that associates with CD247 and/or FCER1G adapters to form functional signaling complexes. Following the engagement of antigen-IgG complexes, triggers phosphorylation of immunoreceptor tyrosine-based activation motif (ITAM)-containing adapters with subsequent activation of phosphatidylinositol 3-kinase signaling and sustained elevation of intracellular calcium that ultimately drive NK cell activation. The ITAM-dependent signaling coupled to receptor phosphorylation by PKC mediates robust intracellular calcium flux that leads to production of pro-inflammatory cytokines, whereas in the absence of receptor phosphorylation it mainly activates phosphatidylinositol 3-kinase signaling leading to cell degranulation. Costimulates NK cells and trigger lysis of target cells independently of IgG binding. Mediates the antitumor activities of therapeutic antibodies. Upon ligation on monocytes triggers TNFA-dependent ADCC of IgG-coated tumor cells. Mediates enhanced ADCC in response to afucosylated IgGs. This is Low affinity immunoglobulin gamma Fc region receptor III-A (FCGR3A) from Macaca fascicularis (Crab-eating macaque).